The primary structure comprises 116 residues: Small ribosomal subunit protein bS16 (116 aa).

A disordered region spans residues 88–116 (RNNPKAAVPGKRMAELAKKKAERAAASAE). Over residues 99 to 110 (RMAELAKKKAER) the composition is skewed to basic and acidic residues.

It belongs to the bacterial ribosomal protein bS16 family.

This is Small ribosomal subunit protein bS16 from Cereibacter sphaeroides (strain ATCC 17025 / ATH 2.4.3) (Rhodobacter sphaeroides).